Consider the following 149-residue polypeptide: Calmodulin (149 aa).

Position 2 is an N-acetylalanine (Ala2). EF-hand domains are found at residues Glu8–Asn43, Pro44–Asp79, Asp81–Lys116, and Leu117–Lys149. Asp21, Asp23, Asp25, Thr27, Glu32, Asp57, Asp59, Asn61, Thr63, Glu68, Asp94, Asp96, Asn98, Tyr100, and Glu105 together coordinate Ca(2+). Lys116 is modified (N6,N6,N6-trimethyllysine). Ca(2+) contacts are provided by Asp130, Asp132, Asp134, Gln136, and Glu141.

It belongs to the calmodulin family.

Functionally, calmodulin acts as part of a calcium signal transduction pathway by mediating the control of a large number of enzymes, ion channels, aquaporins and other proteins through calcium-binding. Calcium-binding is required for the activation of calmodulin. Among the enzymes to be stimulated by the calmodulin-calcium complex are a number of protein kinases, such as myosin light-chain kinases and calmodulin-dependent protein kinase type II (CaMK2), and phosphatases. This is Calmodulin (calm) from Epinephelus akaara (Hong Kong grouper).